A 397-amino-acid polypeptide reads, in one-letter code: Elongation factor Tu (397 aa).

One can recognise a tr-type G domain in the interval 10–207; that stretch reads KPHCNIGTIG…EVDKYIPQPE (198 aa). The segment at 19–26 is G1; it reads GHVDHGKT. A GTP-binding site is contributed by 19–26; that stretch reads GHVDHGKT. Thr26 provides a ligand contact to Mg(2+). The segment at 61–65 is G2; it reads GITIS. Residues 82–85 are G3; sequence DCPG. GTP is bound by residues 82–86 and 137–140; these read DCPGH and NKCD. Residues 137 to 140 are G4; that stretch reads NKCD. The segment at 175–177 is G5; it reads SAL.

The protein belongs to the TRAFAC class translation factor GTPase superfamily. Classic translation factor GTPase family. EF-Tu/EF-1A subfamily. Monomer.

The protein localises to the cytoplasm. It carries out the reaction GTP + H2O = GDP + phosphate + H(+). Its function is as follows. GTP hydrolase that promotes the GTP-dependent binding of aminoacyl-tRNA to the A-site of ribosomes during protein biosynthesis. The polypeptide is Elongation factor Tu (Azorhizobium caulinodans (strain ATCC 43989 / DSM 5975 / JCM 20966 / LMG 6465 / NBRC 14845 / NCIMB 13405 / ORS 571)).